Here is a 75-residue protein sequence, read N- to C-terminus: Probable protein BRICK1-B (75 aa).

Residues M41–E72 are a coiled coil.

This sequence belongs to the BRK1 family.

The protein localises to the cytoplasm. It is found in the cytoskeleton. In terms of biological role, involved in regulation of actin and microtubule organization. Part of a WAVE complex that activates the Arp2/3 complex. The polypeptide is Probable protein BRICK1-B (brk1-b) (Xenopus laevis (African clawed frog)).